A 177-amino-acid polypeptide reads, in one-letter code: Putative adenylate kinase (177 aa).

ATP is bound by residues Gly10, Gly12, Lys13, Thr14, and Thr15. Residues 30 to 50 (NLRDYALEKGIGEMKENELEI) are NMP. The segment at 99 to 109 (ERGYGREKLGE) is LID. Arg100 and Lys138 together coordinate ATP.

Belongs to the adenylate kinase family. AK6 subfamily. In terms of assembly, interacts with uS11. Not a structural component of 40S pre-ribosomes, but transiently interacts with them by binding to uS11.

It carries out the reaction AMP + ATP = 2 ADP. The catalysed reaction is ATP + H2O = ADP + phosphate + H(+). In terms of biological role, broad-specificity nucleoside monophosphate (NMP) kinase that catalyzes the reversible transfer of the terminal phosphate group between nucleoside triphosphates and monophosphates. Also has ATPase activity. Involved in the late maturation steps of the 30S ribosomal particles, specifically 16S rRNA maturation. While NMP activity is not required for ribosome maturation, ATPase activity is. Associates transiently with small ribosomal subunit protein uS11. ATP hydrolysis breaks the interaction with uS11. May temporarily remove uS11 from the ribosome to enable a conformational change of the ribosomal RNA that is needed for the final maturation step of the small ribosomal subunit. This chain is Putative adenylate kinase, found in Thermococcus kodakarensis (strain ATCC BAA-918 / JCM 12380 / KOD1) (Pyrococcus kodakaraensis (strain KOD1)).